The sequence spans 142 residues: NADH-quinone oxidoreductase subunit A (142 aa).

The next 3 membrane-spanning stretches (helical) occupy residues 8–28 (FGTV…GYLT), 63–83 (FYVV…LFPW), and 93–113 (FALI…VYAW).

It belongs to the complex I subunit 3 family. NDH-1 is composed of 14 different subunits. Subunits NuoA, H, J, K, L, M, N constitute the membrane sector of the complex.

Its subcellular location is the cell inner membrane. The enzyme catalyses a quinone + NADH + 5 H(+)(in) = a quinol + NAD(+) + 4 H(+)(out). In terms of biological role, NDH-1 shuttles electrons from NADH, via FMN and iron-sulfur (Fe-S) centers, to quinones in the respiratory chain. The immediate electron acceptor for the enzyme in this species is believed to be a menaquinone. Couples the redox reaction to proton translocation (for every two electrons transferred, four hydrogen ions are translocated across the cytoplasmic membrane), and thus conserves the redox energy in a proton gradient. This chain is NADH-quinone oxidoreductase subunit A, found in Chlorobium phaeobacteroides (strain BS1).